The primary structure comprises 687 residues: DNA ligase (687 aa).

NAD(+)-binding positions include 34 to 38 (DAEYD), 83 to 84 (SL), and E117. K119 acts as the N6-AMP-lysine intermediate in catalysis. Residues R140, E182, K298, and K322 each coordinate NAD(+). Zn(2+)-binding residues include C416, C419, C434, and C439. The 79-residue stretch at 609–687 (EARGPFAGKT…EEEFVRLLKE (79 aa)) folds into the BRCT domain.

Belongs to the NAD-dependent DNA ligase family. LigA subfamily. Mg(2+) serves as cofactor. It depends on Mn(2+) as a cofactor.

It catalyses the reaction NAD(+) + (deoxyribonucleotide)n-3'-hydroxyl + 5'-phospho-(deoxyribonucleotide)m = (deoxyribonucleotide)n+m + AMP + beta-nicotinamide D-nucleotide.. In terms of biological role, DNA ligase that catalyzes the formation of phosphodiester linkages between 5'-phosphoryl and 3'-hydroxyl groups in double-stranded DNA using NAD as a coenzyme and as the energy source for the reaction. It is essential for DNA replication and repair of damaged DNA. This is DNA ligase from Anaeromyxobacter dehalogenans (strain 2CP-1 / ATCC BAA-258).